The chain runs to 318 residues: NADH-quinone oxidoreductase subunit H 2 (318 aa).

The next 9 helical transmembrane spans lie at 4–24 (LLIALFSLILLLALLGAAGVF), 77–97 (LAPALAAFPMLAGFGVVAFAP), 106–126 (VGVLFVMGMLALTVWALVLGA), 146–166 (LAYESFLGLSLMGCVLLAGSF), 179–199 (LWFILLQPLGAALFFLAGLAA), 214–234 (LVAGFMTEYSGMSFALFFLGE), 238–258 (ILLVAALFTTLFLGGWAGPIL), 262–282 (IWFGLKVAAISVVFVWLRAAL), and 293–313 (FAWKVALPLALLNLLVTAWIA).

The protein belongs to the complex I subunit 1 family. In terms of assembly, NDH-1 is composed of 14 different subunits. Subunits NuoA, H, J, K, L, M, N constitute the membrane sector of the complex.

The protein localises to the cell inner membrane. It carries out the reaction a quinone + NADH + 5 H(+)(in) = a quinol + NAD(+) + 4 H(+)(out). In terms of biological role, NDH-1 shuttles electrons from NADH, via FMN and iron-sulfur (Fe-S) centers, to quinones in the respiratory chain. The immediate electron acceptor for the enzyme in this species is believed to be ubiquinone. Couples the redox reaction to proton translocation (for every two electrons transferred, four hydrogen ions are translocated across the cytoplasmic membrane), and thus conserves the redox energy in a proton gradient. This subunit may bind ubiquinone. The protein is NADH-quinone oxidoreductase subunit H 2 of Cereibacter sphaeroides (strain ATCC 17023 / DSM 158 / JCM 6121 / CCUG 31486 / LMG 2827 / NBRC 12203 / NCIMB 8253 / ATH 2.4.1.) (Rhodobacter sphaeroides).